The primary structure comprises 766 residues: Semaphorin-4E (766 aa).

Residues 1 to 24 (MMSLLAVLCVLYVWSPAMLTGGLG) form the signal peptide. Residues 25-664 (STLDSLPRKT…LHHVKEKERT (640 aa)) are Extracellular-facing. One can recognise a Sema domain in the interval 27–499 (LDSLPRKTVP…SEVGVVQLSI (473 aa)). Asn-52 carries N-linked (GlcNAc...) asparagine glycosylation. Cystine bridges form between Cys-100–Cys-111, Cys-129–Cys-138, Cys-261–Cys-373, and Cys-285–Cys-329. Asn-433 is a glycosylation site (N-linked (GlcNAc...) asparagine). The PSI domain maps to 501–552 (ECGRYQTCLDCVLARDPHCGWDLDTEHCATINSIHRTRSSTVIQSLNDGDAS). 2 disulfide bridges follow: Cys-502–Cys-519 and Cys-511–Cys-528. The Ig-like C2-type domain maps to 555–640 (PAIGVSKPVN…QRKYQTQHVA (86 aa)). Residues Asn-564 and Asn-612 are each glycosylated (N-linked (GlcNAc...) asparagine). Cys-577 and Cys-623 are disulfide-bonded. The helical transmembrane segment at 665–685 (LVAMVVILSLVLAALLIWNLY) threads the bilayer. At 686 to 766 (KGHLSLPCLH…LKYIDDESEI (81 aa)) the chain is on the cytoplasmic side. Positions 724-750 (FNSNNNHANDQRYSSSRETDRLSTTAG) are disordered.

The protein belongs to the semaphorin family.

It is found in the membrane. The sequence is that of Semaphorin-4E (sema4e) from Danio rerio (Zebrafish).